A 109-amino-acid chain; its full sequence is Ferredoxin CarAc (109 aa).

A 2Fe-2S ferredoxin-type domain is found at 3-108 (AKVRVIFRAA…GLTLELPKAQ (106 aa)). [2Fe-2S] cluster is bound by residues Cys-43, Cys-49, Cys-52, and Cys-89.

The protein belongs to the adrenodoxin/putidaredoxin family. As to quaternary structure, monomer. Carbazole 1,9a-dioxygenase complex consists of a terminal oxygenase component CarAa, a ferredoxin reductase component fdr and a ferredoxin component CarAc. It depends on [2Fe-2S] cluster as a cofactor.

Its function is as follows. Part of the multicomponent carbazole 1,9a-dioxygenase (CARDO), that converts carbazole (CAR) into 2-aminobiphenyl-2,3-diol. Acts as a mediator in the electron transfer from fdr to CarAa. The chain is Ferredoxin CarAc (carAc) from Sphingomonas sp.